The primary structure comprises 107 residues: Phosphoribosyl-ATP pyrophosphatase (107 aa).

Belongs to the PRA-PH family.

It is found in the cytoplasm. It catalyses the reaction 1-(5-phospho-beta-D-ribosyl)-ATP + H2O = 1-(5-phospho-beta-D-ribosyl)-5'-AMP + diphosphate + H(+). Its pathway is amino-acid biosynthesis; L-histidine biosynthesis; L-histidine from 5-phospho-alpha-D-ribose 1-diphosphate: step 2/9. The sequence is that of Phosphoribosyl-ATP pyrophosphatase from Sinorhizobium medicae (strain WSM419) (Ensifer medicae).